Reading from the N-terminus, the 2259-residue chain is Protein Ycf2 (2259 aa).

1556–1563 (GSQETGRS) contacts ATP.

The protein belongs to the Ycf2 family.

Its subcellular location is the plastid. It is found in the chloroplast stroma. Its function is as follows. Probable ATPase of unknown function. Its presence in a non-photosynthetic plant (Epifagus virginiana) and experiments in tobacco indicate that it has an essential function which is probably not related to photosynthesis. This is Protein Ycf2 from Physcomitrium patens (Spreading-leaved earth moss).